Consider the following 225-residue polypeptide: NAD(P)H-quinone oxidoreductase subunit K, chloroplastic (225 aa).

[4Fe-4S] cluster contacts are provided by Cys43, Cys44, Cys108, and Cys139.

The protein belongs to the complex I 20 kDa subunit family. In terms of assembly, NDH is composed of at least 16 different subunits, 5 of which are encoded in the nucleus. It depends on [4Fe-4S] cluster as a cofactor.

Its subcellular location is the plastid. It is found in the chloroplast thylakoid membrane. The catalysed reaction is a plastoquinone + NADH + (n+1) H(+)(in) = a plastoquinol + NAD(+) + n H(+)(out). The enzyme catalyses a plastoquinone + NADPH + (n+1) H(+)(in) = a plastoquinol + NADP(+) + n H(+)(out). NDH shuttles electrons from NAD(P)H:plastoquinone, via FMN and iron-sulfur (Fe-S) centers, to quinones in the photosynthetic chain and possibly in a chloroplast respiratory chain. The immediate electron acceptor for the enzyme in this species is believed to be plastoquinone. Couples the redox reaction to proton translocation, and thus conserves the redox energy in a proton gradient. The polypeptide is NAD(P)H-quinone oxidoreductase subunit K, chloroplastic (Arabis hirsuta (Hairy rock-cress)).